Reading from the N-terminus, the 522-residue chain is E3 ubiquitin-protein ligase DMA2 (522 aa).

2 disordered regions span residues 1 to 56 (MYTP…RPAS) and 69 to 92 (QNSQTASSSAAPDQRLFGTTPSNS). The span at 14-35 (APTSSMTSNSSSASNANTTSSS) shows a compositional bias: low complexity. The span at 36–49 (GINPRNRASGTPSN) shows a compositional bias: polar residues. A Phosphoserine modification is found at serine 206. Residues lysine 211, lysine 256, lysine 258, lysine 288, lysine 310, lysine 333, lysine 343, lysine 346, lysine 366, lysine 406, lysine 412, and lysine 423 each participate in a glycyl lysine isopeptide (Lys-Gly) (interchain with G-Cter in ubiquitin) cross-link. In terms of domain architecture, FHA spans 295–358 (LVIGRYTERV…SGTFLNHQRL (64 aa)). The RING-type; atypical zinc-finger motif lies at 433 to 477 (CSICLCKIKPCQAIFISPCAHSWHFRCVRRLVMLSYPQFVCPNCR).

The protein belongs to the DMA1 family. Post-translationally, UBC4-dependent autoubiquitination occurs at Lys-211, Lys-258, Lys-288, Lys-310, Lys-333, Lys-343, Lys-346, Lys-366, Lys-406, Lys-412 and Lys-423. UBC13/MMS2-dependent autoubiquitination occurs at Lys-258, Lys-310, Lys-346 and Lys-366. Lys-211, Lys-256, Lys-288, Lys-310, Lys-343, Lys-258, Lys-366 and Lys-412 are also ubiquitinated in trans by DMA1 E3 ligase in association with UBC4.

Its subcellular location is the cytoplasm. It carries out the reaction S-ubiquitinyl-[E2 ubiquitin-conjugating enzyme]-L-cysteine + [acceptor protein]-L-lysine = [E2 ubiquitin-conjugating enzyme]-L-cysteine + N(6)-ubiquitinyl-[acceptor protein]-L-lysine.. Its function is as follows. E3 ubiquitin-protein ligase which functions in cell cycle retarding in conjunction with the UBC4 and UBC13/MMS2 complex, 2 E2 ubiquitin conjugating enzymes. Involved in nutritional control of the cell cycle. Required for proper spindle positioning, likely regulating septin ring deposition at the bud neck. The polypeptide is E3 ubiquitin-protein ligase DMA2 (DMA2) (Saccharomyces cerevisiae (strain YJM789) (Baker's yeast)).